The chain runs to 203 residues: Holliday junction branch migration complex subunit RuvA (203 aa).

Residues 1 to 64 form a domain I region; sequence MIGRLRGIIL…EDAQLLYGFN (64 aa). The interval 65 to 142 is domain II; that stretch reads NKQERTLFKE…KGLHGDLFTP (78 aa). The interval 143–154 is flexible linker; it reads AVDLVLTSPASP. The domain III stretch occupies residues 155–203; sequence TSEDAEQEAVAALVALGYKPQEASRMVSKIARPDASSETLIRDALRAAL.

This sequence belongs to the RuvA family. In terms of assembly, homotetramer. Forms an RuvA(8)-RuvB(12)-Holliday junction (HJ) complex. HJ DNA is sandwiched between 2 RuvA tetramers; dsDNA enters through RuvA and exits via RuvB. An RuvB hexamer assembles on each DNA strand where it exits the tetramer. Each RuvB hexamer is contacted by two RuvA subunits (via domain III) on 2 adjacent RuvB subunits; this complex drives branch migration. In the full resolvosome a probable DNA-RuvA(4)-RuvB(12)-RuvC(2) complex forms which resolves the HJ.

It localises to the cytoplasm. In terms of biological role, the RuvA-RuvB-RuvC complex processes Holliday junction (HJ) DNA during genetic recombination and DNA repair, while the RuvA-RuvB complex plays an important role in the rescue of blocked DNA replication forks via replication fork reversal (RFR). RuvA specifically binds to HJ cruciform DNA, conferring on it an open structure. The RuvB hexamer acts as an ATP-dependent pump, pulling dsDNA into and through the RuvAB complex. HJ branch migration allows RuvC to scan DNA until it finds its consensus sequence, where it cleaves and resolves the cruciform DNA. The protein is Holliday junction branch migration complex subunit RuvA of Salmonella agona (strain SL483).